The following is a 129-amino-acid chain: Protein Turandot B2 (129 aa).

The first 21 residues, 1–21, serve as a signal peptide directing secretion; it reads MNSATSLMCFALLLISPLCMG.

The protein belongs to the Turandot family.

It localises to the secreted. A humoral factor that may play a role in stress tolerance. This Drosophila erecta (Fruit fly) protein is Protein Turandot B2 (TotB2).